The chain runs to 379 residues: Alcohol dehydrogenase class-3 (379 aa).

Position 2 is an N-acetylserine (Ser-2). 7 residues coordinate Zn(2+): Cys-48, His-70, Cys-100, Cys-103, Cys-106, Cys-114, and Cys-177.

Belongs to the zinc-containing alcohol dehydrogenase family. Class-III subfamily. The cofactor is Zn(2+).

It catalyses the reaction a primary alcohol + NAD(+) = an aldehyde + NADH + H(+). It carries out the reaction a secondary alcohol + NAD(+) = a ketone + NADH + H(+). The catalysed reaction is S-(hydroxymethyl)glutathione + NADP(+) = S-formylglutathione + NADPH + H(+). The enzyme catalyses S-(hydroxymethyl)glutathione + NAD(+) = S-formylglutathione + NADH + H(+). It catalyses the reaction octan-1-ol + NAD(+) = octanal + NADH + H(+). Functionally, class-III ADH is remarkably ineffective in oxidizing ethanol, but it readily catalyzes the oxidation of long-chain primary alcohols and the oxidation of S-(hydroxymethyl) glutathione. In Drosophila melanogaster (Fruit fly), this protein is Alcohol dehydrogenase class-3 (Fdh).